A 219-amino-acid chain; its full sequence is UPF0502 protein Gura_3445 (219 aa).

A disordered region spans residues 162–181 (AGEPDLPDDTPAPPPEPARQ).

It belongs to the UPF0502 family.

The protein is UPF0502 protein Gura_3445 of Geotalea uraniireducens (strain Rf4) (Geobacter uraniireducens).